We begin with the raw amino-acid sequence, 198 residues long: Charged multivesicular body protein 1a (198 aa).

Coiled-coil stretches lie at residues 7 to 41 and 176 to 198; these read QLKF…QQKN and GETS…ALRN. The tract at residues 171-198 is disordered; that stretch reads GASALGETSARAQEKEDQLSRRLAALRN. Residues 187-197 carry the MIT-interacting motif motif; it reads DQLSRRLAALR.

It belongs to the SNF7 family. As to quaternary structure, probable peripherally associated component of the endosomal sorting required for transport complex III (ESCRT-III).

It localises to the cytoplasm. The protein localises to the endosome membrane. Its function is as follows. Probable peripherally associated component of the endosomal sorting required for transport complex III (ESCRT-III) which is involved in multivesicular bodies (MVBs) formation and sorting of endosomal cargo proteins into MVBs. MVBs contain intraluminal vesicles (ILVs) that are generated by invagination and scission from the limiting membrane of the endosome and mostly are delivered to lysosomes enabling degradation of membrane proteins, such as stimulated growth factor receptors, lysosomal enzymes and lipids. The sequence is that of Charged multivesicular body protein 1a (chmp1a) from Danio rerio (Zebrafish).